Here is a 364-residue protein sequence, read N- to C-terminus: Probable dual-specificity RNA methyltransferase RlmN (364 aa).

Catalysis depends on Glu-107, which acts as the Proton acceptor. Residues 113–346 (HDYGNSVCVT…ATIRREQGSD (234 aa)) form the Radical SAM core domain. Cys-120 and Cys-351 are joined by a disulfide. [4Fe-4S] cluster is bound by residues Cys-127, Cys-131, and Cys-134. S-adenosyl-L-methionine is bound by residues 177 to 178 (GE), Ser-209, 232 to 234 (SLH), and Asn-308. The S-methylcysteine intermediate role is filled by Cys-351.

The protein belongs to the radical SAM superfamily. RlmN family. Requires [4Fe-4S] cluster as cofactor.

It is found in the cytoplasm. It catalyses the reaction adenosine(2503) in 23S rRNA + 2 reduced [2Fe-2S]-[ferredoxin] + 2 S-adenosyl-L-methionine = 2-methyladenosine(2503) in 23S rRNA + 5'-deoxyadenosine + L-methionine + 2 oxidized [2Fe-2S]-[ferredoxin] + S-adenosyl-L-homocysteine. It carries out the reaction adenosine(37) in tRNA + 2 reduced [2Fe-2S]-[ferredoxin] + 2 S-adenosyl-L-methionine = 2-methyladenosine(37) in tRNA + 5'-deoxyadenosine + L-methionine + 2 oxidized [2Fe-2S]-[ferredoxin] + S-adenosyl-L-homocysteine. Its function is as follows. Specifically methylates position 2 of adenine 2503 in 23S rRNA and position 2 of adenine 37 in tRNAs. Confers resistance to some classes of antibiotics. The polypeptide is Probable dual-specificity RNA methyltransferase RlmN (Staphylococcus aureus (strain MW2)).